The following is a 519-amino-acid chain: GMP synthase [glutamine-hydrolyzing] (519 aa).

Positions 4–201 (AILILDFGSQ…VHDICDAGYD (198 aa)) constitute a Glutamine amidotransferase type-1 domain. Residue cysteine 81 is the Nucleophile of the active site. Residues histidine 175 and glutamate 177 contribute to the active site. Positions 202-394 (WNMPDYVEEA…LGLPRDLVFR (193 aa)) constitute a GMPS ATP-PPase domain. 229 to 235 (SGGVDSS) is an ATP binding site.

As to quaternary structure, homodimer.

It carries out the reaction XMP + L-glutamine + ATP + H2O = GMP + L-glutamate + AMP + diphosphate + 2 H(+). Its pathway is purine metabolism; GMP biosynthesis; GMP from XMP (L-Gln route): step 1/1. Functionally, catalyzes the synthesis of GMP from XMP. The protein is GMP synthase [glutamine-hydrolyzing] of Nitrosomonas eutropha (strain DSM 101675 / C91 / Nm57).